Consider the following 267-residue polypeptide: Phosphate import ATP-binding protein PstB (267 aa).

The ABC transporter domain maps to 21–262 (VAARNLDFYY…PSKQQTEDYI (242 aa)). 53-60 (GPSGCGKS) contributes to the ATP binding site.

Belongs to the ABC transporter superfamily. Phosphate importer (TC 3.A.1.7) family. As to quaternary structure, the complex is composed of two ATP-binding proteins (PstB), two transmembrane proteins (PstC and PstA) and a solute-binding protein (PstS).

It is found in the cell inner membrane. The catalysed reaction is phosphate(out) + ATP + H2O = ADP + 2 phosphate(in) + H(+). Functionally, part of the ABC transporter complex PstSACB involved in phosphate import. Responsible for energy coupling to the transport system. The polypeptide is Phosphate import ATP-binding protein PstB (Xanthomonas euvesicatoria pv. vesicatoria (strain 85-10) (Xanthomonas campestris pv. vesicatoria)).